The sequence spans 443 residues: MRYLPKSQSDRDQMLRELGCATIDDLFAPIPAEYRLTRDLAIPRQYGESEILDFFKQRASENANGYSIFIGAGAYNHYRPVVIDSLISRGEWFTAYTPYQPEISQGTLQAIFEFQSMICELTGMEVANASMYDGSTGAAEAIMMAVRLTGRHSAIIANTVHPEYREVIATYAQHQGLPISHVGYNAETGRVDIKALEAAITDQTAAVLIQSPNFFGTIEDVAAIADLVHKKGALLVVSISEALSLGLIKPPSEADIISMESQSFGVPLGYGGPYVGVIATKEKFVRQIPGRLCGQTVDRNGKRGFVLTLSTREQHIRREKATSNICTNQALIALIASIFMTVYGKQGLRELAKQNLAKTAYAVSAFEKAGAKVLFKNSPFFNEFVVQTKSDSRELNDKLISDKIIGGFPLKKFYPELGNSAVWCVTELNAKAAIDAAAKGVAQ.

It belongs to the GcvP family. N-terminal subunit subfamily. The glycine cleavage system is composed of four proteins: P, T, L and H. In this organism, the P 'protein' is a heterodimer of two subunits.

It catalyses the reaction N(6)-[(R)-lipoyl]-L-lysyl-[glycine-cleavage complex H protein] + glycine + H(+) = N(6)-[(R)-S(8)-aminomethyldihydrolipoyl]-L-lysyl-[glycine-cleavage complex H protein] + CO2. In terms of biological role, the glycine cleavage system catalyzes the degradation of glycine. The P protein binds the alpha-amino group of glycine through its pyridoxal phosphate cofactor; CO(2) is released and the remaining methylamine moiety is then transferred to the lipoamide cofactor of the H protein. This is Probable glycine dehydrogenase (decarboxylating) subunit 1 from Koribacter versatilis (strain Ellin345).